A 317-amino-acid polypeptide reads, in one-letter code: Malate dehydrogenase (317 aa).

NAD(+) contacts are provided by residues 10 to 15 (GGGQIG) and aspartate 34. Substrate contacts are provided by arginine 83 and arginine 89. Residues asparagine 96 and 119 to 121 (ISN) each bind NAD(+). The substrate site is built by asparagine 121 and arginine 152. The Proton acceptor role is filled by histidine 176.

This sequence belongs to the LDH/MDH superfamily. MDH type 3 family.

It carries out the reaction (S)-malate + NAD(+) = oxaloacetate + NADH + H(+). Catalyzes the reversible oxidation of malate to oxaloacetate. This chain is Malate dehydrogenase, found in Citrifermentans bemidjiense (strain ATCC BAA-1014 / DSM 16622 / JCM 12645 / Bem) (Geobacter bemidjiensis).